The following is a 365-amino-acid chain: Histidinol-phosphate aminotransferase (365 aa).

Lys-223 is subject to N6-(pyridoxal phosphate)lysine.

The protein belongs to the class-II pyridoxal-phosphate-dependent aminotransferase family. Histidinol-phosphate aminotransferase subfamily. In terms of assembly, homodimer. Pyridoxal 5'-phosphate is required as a cofactor.

It catalyses the reaction L-histidinol phosphate + 2-oxoglutarate = 3-(imidazol-4-yl)-2-oxopropyl phosphate + L-glutamate. It participates in amino-acid biosynthesis; L-histidine biosynthesis; L-histidine from 5-phospho-alpha-D-ribose 1-diphosphate: step 7/9. This chain is Histidinol-phosphate aminotransferase, found in Brucella melitensis biotype 1 (strain ATCC 23456 / CCUG 17765 / NCTC 10094 / 16M).